The chain runs to 444 residues: Zinc finger CCCH domain-containing protein 63 (444 aa).

C3H1-type zinc fingers lie at residues 56–84 (RIGE…HPAD), 101–129 (RIGQ…HPRE), and 147–175 (RPNE…HPQP). A disordered region spans residues 251–276 (GSSSSDDQQRTAGGAQYYTGSRHSET). 2 consecutive C3H1-type zinc fingers follow at residues 309–337 (RPDQ…HPKE) and 355–383 (RPGE…HPMG). Residues 405-444 (PVPAHSEVSPDNVSGRSRRITHSDSQQIPSGERGTEREAS) form a disordered region.

The chain is Zinc finger CCCH domain-containing protein 63 from Oryza sativa subsp. japonica (Rice).